Here is an 85-residue protein sequence, read N- to C-terminus: Putative membrane protein insertion efficiency factor (85 aa).

The segment at 62–85 (KGGFDPVPLKKDKSASKHSHKHNH) is disordered.

Belongs to the UPF0161 family.

It is found in the cell membrane. Functionally, could be involved in insertion of integral membrane proteins into the membrane. In Staphylococcus aureus (strain Mu3 / ATCC 700698), this protein is Putative membrane protein insertion efficiency factor.